The following is a 196-amino-acid chain: MSRYRGPRLKKIRRLGALPGLTRKTPKSRSNLKKKFHSGKKEQYRIRLQEKQKLRFHYGLTERQLLRYVQIAGKAKRSTGQVLLQLLEMRLDNILFRLGMASTIPGARQLVNHRHILVNGRIVNIPSFRCKPRDIITTKDNQRSKGLVQNSIASSDPGKLPKHLTIDTLEYKGLVNKILDRKWVGLKINELLVVEY.

Residues 17–38 are disordered; the sequence is ALPGLTRKTPKSRSNLKKKFHS. The span at 24–38 shows a compositional bias: basic residues; the sequence is KTPKSRSNLKKKFHS. Residues 89–169 form the S4 RNA-binding domain; it reads MRLDNILFRL…LPKHLTIDTL (81 aa).

The protein belongs to the universal ribosomal protein uS4 family. As to quaternary structure, part of the 30S ribosomal subunit. Contacts protein S5. The interaction surface between S4 and S5 is involved in control of translational fidelity.

The protein resides in the plastid. Its subcellular location is the chloroplast. Functionally, one of the primary rRNA binding proteins, it binds directly to 16S rRNA where it nucleates assembly of the body of the 30S subunit. Its function is as follows. With S5 and S12 plays an important role in translational accuracy. This Lygeum spartum protein is Small ribosomal subunit protein uS4c (rps4).